A 703-amino-acid polypeptide reads, in one-letter code: Calpain-8 (703 aa).

In terms of domain architecture, Calpain catalytic spans 45-344; that stretch reads LFKDPEFPAC…FSRLEICNLS (300 aa). Active-site residues include C105, H262, and N286. The domain III stretch occupies residues 356-379; sequence WNLVLFNGHWTRGSTAGGCQNYPA. 3 consecutive EF-hand domains span residues 575-610, 618-640, and 670-703; these read FNIN…IQKY, DYNH…AGFT, and IRLE…CVLV. Ca(2+) contacts are provided by D588, N590, T592, T594, E599, D618, N620, S622, T624, and E629.

It belongs to the peptidase C2 family. In terms of assembly, monomer and homooligomer. Interacts with COPS1/GPS1, COPB1, EYA2, NME2, NME4 and TOMM70. Ca(2+) is required as a cofactor. Post-translationally, undergoes autolytic cleavage between Ala-5 and Ala-6 which gives rise to fragments extending from Ala-6 to the C-terminus, Ala-6 to the EF-hand 2 domain and from Ala-6 to the beginning of domain III. Stomach.

The protein resides in the cytoplasm. Its subcellular location is the golgi apparatus. It catalyses the reaction Broad endopeptidase specificity.. Its function is as follows. Calcium-regulated non-lysosomal thiol-protease. Involved in membrane trafficking in the gastric surface mucus cells (pit cells) and may involve the membrane trafficking of mucus cells via interactions with coat protein. Proteolytically cleaves the beta-subunit of coatomer complex. The chain is Calpain-8 (CAPN8) from Homo sapiens (Human).